A 365-amino-acid chain; its full sequence is Pectate trisaccharide-lyase (365 aa).

The signal sequence occupies residues 1–25; that stretch reads MRFSRVVSLVLLLVFTAVLTGAVKA. Positions 142, 164, and 168 each coordinate Ca(2+). The PbH1 1 repeat unit spans residues 149-171; that stretch reads SHHIWIDHCTFVNGNDGAVDIKK. The active site involves Arg222. The stretch at 261–287 is one PbH1 2 repeat; sequence GAKVHVEGNYFMGYGAVMAEAGIAFLP.

The protein belongs to the polysaccharide lyase 1 family. In terms of assembly, homotetramer. Ca(2+) is required as a cofactor.

It localises to the secreted. It carries out the reaction eliminative cleavage of unsaturated trigalacturonate as the major product from the reducing end of polygalacturonic acid/pectate.. Its function is as follows. Cleaves unsaturated trigalacturonate from pectin. Activity is highest towards polygalacturonic acid, activity on methylated pectins decreases with an increasing degree of methylation. The protein is Pectate trisaccharide-lyase of Thermotoga sp. (strain RQ2).